The following is a 335-amino-acid chain: Galactinol synthase 2 (335 aa).

Lys-103 is an active-site residue. 3 residues coordinate Mn(2+): Asp-119, Asp-121, and His-257.

Belongs to the glycosyltransferase 8 family. Galactosyltransferase subfamily. The cofactor is a divalent metal cation. As to expression, accumulates in mature seeds.

It localises to the cytoplasm. The catalysed reaction is myo-inositol + UDP-alpha-D-galactose = alpha-D-galactosyl-(1-&gt;3)-1D-myo-inositol + UDP + H(+). In terms of biological role, galactinol synthase involved in the biosynthesis of raffinose family oligosaccharides (RFOs) that function as osmoprotectants. Promotes stress tolerance of factors such as drought, chilling, salinity and methylviologen (MV), a superoxide radical generating drug, by mediating an increase in levels of the endogenous osmoprotective compounds, galactinol and raffinose. The protein is Galactinol synthase 2 (GOLS2) of Arabidopsis thaliana (Mouse-ear cress).